A 298-amino-acid polypeptide reads, in one-letter code: GTP-binding protein REM 1 (298 aa).

The tract at residues 1 to 73 (MTLNTEQEAK…DDWSSESSDS (73 aa)) is disordered. Polar residues predominate over residues 35 to 55 (TVPSTQSQHPRLGQSASLNPP). Ser-51 is modified (phosphoserine). Low complexity predominate over residues 63-73 (PDDWSSESSDS). Residues 87-94 (GDPGVGKT) and 195-198 (NKAD) contribute to the GTP site. The interval 268–287 (ARRFLARLTARSARRRALKA) is calmodulin-binding.

The protein belongs to the small GTPase superfamily. RGK family. As to quaternary structure, in vitro, interacts with calmodulin in a calcium-dependent manner. In terms of tissue distribution, most highly expressed in the endothelial lining of the blood vessels in uterus and heart. Lower levels found in spleen, lymph node, kidney and testis. Also found in cells with secretory function such as the islets of Langerhans, lobule/duct epithelium in the breast, bile duct epithelium in the liver, surface epithelium in the endometrial glands of the uterus, colon mucosa and acinar cells in the pancreas and the prostate.

Functionally, promotes endothelial cell sprouting and actin cytoskeletal reorganization. May be involved in angiogenesis. May function in Ca(2+) signaling. In Homo sapiens (Human), this protein is GTP-binding protein REM 1 (REM1).